A 360-amino-acid chain; its full sequence is Tyrosine-protein phosphatase non-receptor type 7 (360 aa).

A disordered region spans residues 1-37 (MVQAHGGRSRAQPLTLSLGAAMTQPPPEKTPAKKHVR). An interaction with MAP kinases region spans residues 38–51 (LQERRGSNVALMLD). Position 44 is a phosphoserine (Ser-44). Thr-66 carries the post-translational modification Phosphothreonine. A phosphoserine mark is found at Ser-93, Ser-110, and Ser-143. The Tyrosine-protein phosphatase domain maps to 97 to 350 (LEEEFLKIPS…QFLHHTLALY (254 aa)). Residues Asp-257, 291–297 (CSAGIGR), and Gln-335 contribute to the substrate site. Cys-291 acts as the Phosphocysteine intermediate in catalysis. Cys-291 carries the cysteine sulfenic acid (-SOH) modification.

This sequence belongs to the protein-tyrosine phosphatase family. Non-receptor class subfamily. In terms of assembly, monomer. Interacts with MAPK1, MAPK3 and several other MAP kinases. Post-translationally, phosphorylated on serine residues in resting T-cells. Phosphorylation increases upon exposure to stimuli that increase intracellular cAMP levels. Phosphorylation leads to dissociation of bound MAP kinases. Oxidized at active site cysteine. Treatment with pervanadate (vanadate and H(2)O(2)) or with antigen enhanced oxidation of active site cysteine. Expressed exclusively in thymus and spleen.

The protein localises to the cytoplasm. It is found in the cytoskeleton. The enzyme catalyses O-phospho-L-tyrosyl-[protein] + H2O = L-tyrosyl-[protein] + phosphate. Its activity is regulated as follows. Inhibited in cells after FCER1A triggering. In terms of biological role, protein phosphatase that acts preferentially on tyrosine-phosphorylated MAPK1. Plays a role in the regulation of T and B-lymphocyte development and signal transduction. The sequence is that of Tyrosine-protein phosphatase non-receptor type 7 (PTPN7) from Homo sapiens (Human).